We begin with the raw amino-acid sequence, 376 residues long: WD repeat-containing protein wdr-5.1 (376 aa).

The segment covering 1-24 (MDTSENAASAAEQQPTQQIDQLTV) has biased composition (polar residues). The disordered stretch occupies residues 1-70 (MDTSENAASA…TPNPNAAGAS (70 aa)). Over residues 25–53 (PNAPDGGSSAPAPSTSPNSISPSNPTGTP) the composition is skewed to low complexity. 7 WD repeats span residues 85 to 115 (GHTK…KIWN), 127 to 157 (GHKL…KIFE), 169 to 199 (GHNN…RIWD), 211 to 241 (AHSD…RIWD), 254 to 284 (DENP…KLWD), 296 to 329 (GHEN…YIWN), and 341 to 373 (GHTQ…HIWR).

Belongs to the WD repeat WDR5/wds family. Component of the SET2 complex (also known as the SET1/COMPASS complex), which contains at least set-2, swd-2.1, cfp-1, rbbp-5, wdr-5.1, dpy-30 and ash-2. Within the complex, interacts with cfp-1, ash-2, dpy-30 and hda-1. Interacts with histone H3 both unmethylated and methylated at 'Lys-4'. Interacts with jmjd-3.1, ceh-6, sox-2, sem-4 and egl-27. Interacts with set-2. As to expression, enriched in the germline. Detected in all nuclei of the embryo. In larvae, expression is detected in the nuclei of seam cells, somatic gonad precursor cells Z1 and Z4, vulval precursor cells, distal tip cells, hypodermal cells, intestinal and muscle cells. Also detected in the neurons from the ventral nerve cord, head and tail region. Expressed in the head and tail region, intestinal cells, muscle cells, cells of the vulva, spermatheca and sheath cells in adults.

Its subcellular location is the nucleus. Its function is as follows. Contributes to histone modification. May position the N-terminus of histone H3 for efficient trimethylation at 'Lys-4'. Required for di- and trimethylation, particularly for the trimethylation at 'Lys-4' of histone H3. Not required for demethylation of histone H3 'Lys-27'. H3 'Lys-4' methylation represents a specific tag for epigenetic transcriptional activation, germline establishment, maintenance and function. Implicated in the epigenetic inheritance of lifespan over several generations. Acts in the germline to limit the longevity of the soma, probably by regulating a lipid metabolism pathway that signals from the germline to the intestine, thereby preventing accumulation of mono-unsaturated fatty acids. Required for RNA interference with probable antagonistic role against hpl-2 function. Plays a role in vulval cell fate specification by acting in the synthetic multivulva pathway independent of set-2. Sex determining protein required in the germline to promote the spermatogenesis to oogenesis switch during the late larval stages of development. Acts with the sex determining factor tra-1, and redundantly with wdr-5.2, to regulate fog-3 expression, which in turn determines germ cell fate. Cooperates with jmjd-3.1, egl-27 and unc-3 to ensure robust transdifferentiation of the Y rectal cell to the PDA motor neuron during larval development. The chain is WD repeat-containing protein wdr-5.1 (wdr-5.1) from Caenorhabditis elegans.